The primary structure comprises 556 residues: Acetyl-coenzyme A thioesterase (556 aa).

The HotDog ACOT-type 1 domain occupies 6 to 118 (APGEVLMSQA…FSTFVVKPLG (113 aa)). An N6-succinyllysine modification is found at Lys-34. Residues 54–56 (TAS) and 83–85 (STS) each bind CoA. Residue Lys-97 is modified to N6-succinyllysine. Arg-145 lines the CoA pocket. An N6-succinyllysine mark is found at Lys-160 and Lys-229. The 116-residue stretch at 180 to 295 (MATSVQSIEL…FLIYNAVDDQ (116 aa)) folds into the HotDog ACOT-type 2 domain. Position 235–237 (235–237 (KFR)) interacts with CoA. Positions 341 to 550 (GTQWDISKKG…IKFIENATHD (210 aa)) constitute an START domain.

Homodimer or homotetramer.

It localises to the cytoplasm. The protein resides in the cytosol. The catalysed reaction is acetyl-CoA + H2O = acetate + CoA + H(+). It carries out the reaction butanoyl-CoA + H2O = butanoate + CoA + H(+). The enzyme catalyses hexanoyl-CoA + H2O = hexanoate + CoA + H(+). The protein operates within lipid metabolism; fatty acid metabolism. Its activity is regulated as follows. Allosterically regulated by ATP (activator) and ADP (inhibitor). Cold labile, it dissociates into inactive monomers at low temperature. Catalyzes the hydrolysis of acyl-CoAs into free fatty acids and coenzyme A (CoASH), regulating their respective intracellular levels. Preferentially hydrolyzes acetyl-CoA. This is Acetyl-coenzyme A thioesterase (Acot12) from Rattus norvegicus (Rat).